A 61-amino-acid polypeptide reads, in one-letter code: Conotoxin 3 (61 aa).

A signal peptide spans 1–21; that stretch reads MRCLPVFVILLLLIASVPSDA. A propeptide spanning residues 22–48 is cleaved from the precursor; it reads VQLKTKDDMPLPSFNGNARRTPRMLSN. The residue at position 58 (W58) is a 6'-bromotryptophan.

The protein belongs to the conotoxin T superfamily. Contains 2 disulfide bonds that can be either 'C1-C3, C2-C4' or 'C1-C4, C2-C3', since these disulfide connectivities have been observed for conotoxins with cysteine framework V (for examples, see AC P0DQQ7 and AC P81755). Post-translationally, contains 2 disulfide bonds. As to expression, expressed by the venom duct.

It localises to the secreted. In Conus textile (Cloth-of-gold cone), this protein is Conotoxin 3.